Consider the following 317-residue polypeptide: Non-structural protein 2 (317 aa).

Residues 107-109, K188, and 221-223 each bind ATP; these read SVR and HGK. An RNA-binding region spans residues 205–241; the sequence is LIAELRWQYNKFAVITHGKGHYRVVKYSSVANHADRV. The active-site For NTPase and RTPase activities is H225. R227 contacts ATP.

The protein belongs to the rotavirus NSP2 family. As to quaternary structure, homooctamer. Interacts with VP1; this interaction is weak. Interacts with NSP5; this interaction leads to up-regulation of NSP5 phosphorylation and formation of viral factories. Interacts with host DCP1A, DCP1B, DDX6, EDC4 and EIF2S1/eIF2-alpha; these interactions are probably part of the sequestration of some host SGs and PBs proteins in viral factories. Requires Mg(2+) as cofactor.

The protein localises to the host cytoplasm. In terms of biological role, participates in replication and packaging of the viral genome. Plays a crucial role, together with NSP5, in the formation of virus factories (viroplasms), which are large inclusions in the host cytoplasm where replication intermediates are assembled and viral RNA replication takes place. Displays ssRNA binding, NTPase, RNA triphosphatase (RTPase) and ATP-independent helix-unwinding activities. The unwinding activity may prepare and organize plus-strand RNAs for packaging and replication by removing interfering secondary structures. The RTPase activity plays a role in the removal of the gamma-phosphate from the rotavirus RNA minus strands of dsRNA genome segments. Participates in the selective exclusion of host proteins from stress granules (SG) and P bodies (PB). Also participates in the sequestration of these remodeled organelles in viral factories. This Rotavirus A (strain RVA/Cow/United Kingdom/UK/1975/G6P7[5]) (RV-A) protein is Non-structural protein 2.